Consider the following 921-residue polypeptide: Phototropin-1B (921 aa).

The span at 1–11 (MASKGTEGGHG) shows a compositional bias: gly residues. Disordered stretches follow at residues 1 to 59 (MASK…SPFL) and 88 to 118 (TGLP…QSAA). A compositionally biased stretch (low complexity) spans 40–51 (SSASSFRTAAAA). The span at 97-117 (RPSSGSARTSSEDNPQQQQSA) shows a compositional bias: polar residues. Residues 123–197 (VSEELRAALS…KIRQSLANGS (75 aa)) enclose the PAS 1 domain. FMN is bound by residues 172 to 177 (NCRFLQ), R190, N205, N215, and Q236. Residue C173 is modified to S-4a-FMN cysteine. A PAC 1 domain is found at 197-251 (SNYCGRILNYKKDGTPFWNLLTIAPIKDEDGRLLKFIGMQVEVSKYTEGKKDTVV). Polar residues predominate over residues 286 to 295 (RSLSESSNNT). Disordered stretches follow at residues 286 to 345 (RSLS…QVNR) and 366 to 391 (EKNM…SFED). Composition is skewed to basic and acidic residues over residues 312 to 321 (PSKRSSESGS) and 366 to 376 (EKNMLKPRDED). A PAS 2 domain is found at 400-473 (RGIDLATTLE…RKIRDAIDNQ (74 aa)). FMN is bound by residues 449–454 (NCRFLQ), R467, N482, N492, and Q513. An S-4a-FMN cysteine modification is found at C450. The PAC 2 domain maps to 474–528 (AEVTVQLINYTKSGKKFWNLFHLQPMRDQKGDVQYFIGVQLDGTEHVQDDAAKEG). Residues 594–881 (FRPVKPLGSG…ANEIKGHPFF (288 aa)) form the Protein kinase domain. ATP-binding positions include 600–608 (LGSGDTGSV) and K623. Catalysis depends on D719, which acts as the Proton acceptor.

The protein belongs to the protein kinase superfamily. Ser/Thr protein kinase family. As to quaternary structure, homodimer. The cofactor is FMN. In terms of processing, autophosphorylated in response to blue light irradiation. 2 molecules of FMN bind covalently to cysteines after exposure to blue light and are reversed in the dark.

It carries out the reaction L-seryl-[protein] + ATP = O-phospho-L-seryl-[protein] + ADP + H(+). The enzyme catalyses L-threonyl-[protein] + ATP = O-phospho-L-threonyl-[protein] + ADP + H(+). Functionally, protein kinase that acts as a blue light photoreceptor in a signal-transduction pathway for phototropic responses. Regulates a wide range of physiological activities in plants that maximize the efficiency of photosynthesis, such as chloroplast relocations, stomata opening, and leaf expansion. This chain is Phototropin-1B (PHOT1B), found in Oryza sativa subsp. japonica (Rice).